Reading from the N-terminus, the 71-residue chain is Bacteriocin carnobacteriocin-A (71 aa).

A propeptide spanning residues 1–18 is cleaved from the precursor; it reads MNNVKELSIKEMQQVTGG. An intrachain disulfide couples cysteine 40 to cysteine 69.

Its subcellular location is the secreted. Its function is as follows. Has antibacterial activity. The protein is Bacteriocin carnobacteriocin-A (cbnBA) of Carnobacterium maltaromaticum (Carnobacterium piscicola).